We begin with the raw amino-acid sequence, 122 residues long: Large ribosomal subunit protein uL14 (122 aa).

The protein belongs to the universal ribosomal protein uL14 family. In terms of assembly, part of the 50S ribosomal subunit. Forms a cluster with proteins L3 and L19. In the 70S ribosome, L14 and L19 interact and together make contacts with the 16S rRNA in bridges B5 and B8.

In terms of biological role, binds to 23S rRNA. Forms part of two intersubunit bridges in the 70S ribosome. This Lachnospira eligens (strain ATCC 27750 / DSM 3376 / VPI C15-48 / C15-B4) (Eubacterium eligens) protein is Large ribosomal subunit protein uL14.